The primary structure comprises 89 residues: Small ribosomal subunit protein uS17 (89 aa).

The protein belongs to the universal ribosomal protein uS17 family. In terms of assembly, part of the 30S ribosomal subunit.

In terms of biological role, one of the primary rRNA binding proteins, it binds specifically to the 5'-end of 16S ribosomal RNA. This is Small ribosomal subunit protein uS17 from Acidovorax ebreus (strain TPSY) (Diaphorobacter sp. (strain TPSY)).